We begin with the raw amino-acid sequence, 461 residues long: D-phenylhydantoinase (461 aa).

A divalent metal cation is bound by residues H59, H61, and K151. Position 151 is an N6-carboxylysine (K151). Position 156 (Y156) interacts with substrate. H182 and H239 together coordinate a divalent metal cation. S286 is a binding site for substrate. Residue D313 coordinates a divalent metal cation. N335 is a binding site for substrate.

This sequence belongs to the metallo-dependent hydrolases superfamily. Hydantoinase/dihydropyrimidinase family. Homotetramer. Requires Zn(2+) as cofactor. The cofactor is Ni(2+). Co(2+) serves as cofactor. Mn(2+) is required as a cofactor. Carboxylation allows a single lysine to coordinate two divalent metal cations.

The enzyme catalyses D-5-phenylhydantoin + H2O = N-carbamoyl-D-phenylglycine + H(+). Catalyzes the stereospecific hydrolysis of the cyclic amide bond of D-hydantoin derivatives with an aromatic side chains at the 5'-position. Has no activity on dihydropyrimidines. The physiological function is unknown. This chain is D-phenylhydantoinase (hyuA), found in Escherichia coli (strain K12).